The chain runs to 351 residues: MMARNVLVSGGAGYIGSHTVLQLLLGGYSVVVVDNLDNSSAVSLQRVKKLAAEHGERLSFHQVDLRDRSALEKIFSETKFDAVIHFAGLKAVGESVEKPLLYYNNNLVGTITLLEVMAQHGCKNLVFSSSATVYGSPKEVPCTEEFPISALNPYGRTKLFIEEICRDVYGSDPEWKIILLRYFNPVGAHPSGDIGEDPRGIPNNLMPFVQQVAVGRRPHLTVFGNDYNTKDGTGVRDYIHVIDLADGHIAALRKLEDCKIGCEVYNLGTGNGTSVLEMVDAFEKASGKKIPLVIAGRRPGDAEVVYASTERAESELNWKAKYGIEEMCRDLWNWASNNPYGYDSSSEDNSH.

Residues 13–15 (GYI), 34–38 (DNLDN), 64–65 (DL), phenylalanine 86, and lysine 90 each bind NAD(+). A substrate-binding site is contributed by 130–132 (SAT). Tyrosine 154 serves as the catalytic Proton acceptor. Positions 158 and 182 each coordinate NAD(+). Residues 182–184 (YFN), 203–205 (NNL), 221–223 (TVF), arginine 236, and 298–301 (RPGD) contribute to the substrate site.

This sequence belongs to the NAD(P)-dependent epimerase/dehydratase family. Forms homodimers and heterodimers. NAD(+) serves as cofactor. As to expression, widely expressed.

It catalyses the reaction UDP-alpha-D-glucose = UDP-alpha-D-galactose. It functions in the pathway carbohydrate metabolism; galactose metabolism. Its activity is regulated as follows. Enhanced activity by NaCl. Inhibited by UDP. Its function is as follows. Catalyzes the interconversion between UDP-glucose and UDP-galactose. The chain is UDP-glucose 4-epimerase 5 from Arabidopsis thaliana (Mouse-ear cress).